A 354-amino-acid polypeptide reads, in one-letter code: Nucleoporin seh1 (354 aa).

WD repeat units lie at residues 10-49, 55-96, 112-153, 161-209, 216-259, and 270-309; these read DHKD…KWNV, AHSG…KVSS, DSRT…NLSQ, SNKL…RKCV, DITD…TDIS, and EHNC…QWRC.

Belongs to the WD repeat SEC13 family. In terms of assembly, probable component of the nuclear pore complex (NPC). Component of the GATOR complex consisting of mio, Nup44A/Seh1, Im11, Nplr3, Nplr2, Wdr24, Wdr59 and Sec13. Within the GATOR complex, probable component of the GATOR2 subcomplex which is likely composed of mio, Nup44A/Seh1, Wdr24, Wdr59 and Sec13. Interacts with mio. Interacts with Wdr24. The GATOR2 complex associates with unmet in the absence of S-adenosyl-L-methionine; the mio-Wdr24-Nup44A subcomplex is essential and sufficient for this interaction while Wdr59 and Sec13 are dispensable. This association acts as a nutrient sensor to inhibit mTORC1 signaling in the absence of methionine. Expressed in ovarian cysts.

It localises to the nucleus envelope. The protein resides in the lysosome. Its function is as follows. Probable component of the nuclear pore complex (NPC). Involved in maintaining the localization of another nucleoporin Mgtor to the nuclear envelope of early meiotic female germline cells. It is not involved in recruiting the nucleoporins Mgtor, Nup107, Nup153 and FG-containing nucleoporins to the NPC. Functionally, an essential component of the GATOR subcomplex GATOR2 which functions as an activator of the amino acid-sensing branch of the mTORC1 signaling pathway. The two GATOR subcomplexes, GATOR1 and GATOR2, regulate the mTORC1 pathway in order to mediate metabolic homeostasis, female gametogenesis and the response to amino acid limitation and complete starvation. GATOR2 activates the mTORC1 signaling pathway through the inhibition of the GATOR1 subcomplex, controlling the switch to cell proliferation growth under nutrient replete conditions and growth during female oocyte development. This component is required for activating mTORC1 specifically in germline cells to promote cell growth and maintain the oocyte fate, probably influences the organization and/or function of microtubules within ovarian cysts, and promotes accumulation of another GATOR2 complex member mio in germline and somatic tissues. GATOR1 and GATOR2 act at different stages of oogenesis to regulate mTORC1 in order to control meiotic entry and promote oocyte growth and development. After exactly four mitotic cyst divisions, the GATOR1 complex members (Iml1, Nprl2 and Nprl3) down-regulate mTORC1 to slow cellular metabolism and promote the mitotic/meiotic transition. At later stages of oogenesis, the mio and Nup44A components of the GATOR2 complex inhibit GATOR1 and thus activate mTORC1 to promote meiotic progression, and drive oocyte growth and development. In addition to its role in the regulation of the mTORC1 complex, functions independently of mTORC1 to prevent the inappropriate accumulation of autolysosomes in germline tissues. The polypeptide is Nucleoporin seh1 (Drosophila melanogaster (Fruit fly)).